A 112-amino-acid chain; its full sequence is Putative pterin-4-alpha-carbinolamine dehydratase (112 aa).

This sequence belongs to the pterin-4-alpha-carbinolamine dehydratase family.

It catalyses the reaction (4aS,6R)-4a-hydroxy-L-erythro-5,6,7,8-tetrahydrobiopterin = (6R)-L-erythro-6,7-dihydrobiopterin + H2O. The protein is Putative pterin-4-alpha-carbinolamine dehydratase of Dechloromonas aromatica (strain RCB).